A 225-amino-acid chain; its full sequence is Holliday junction branch migration complex subunit RuvA (225 aa).

Positions 1–71 (MISWINGDLV…EDSDLLFGFT (71 aa)) are domain I. The interval 72 to 150 (SKDQKNFFIE…SEILSEEEKS (79 aa)) is domain II. Residues 151-161 (KDEFEIKDPEI) are flexible linker. The interval 161–225 (IIKMIEDLQL…LDEDSSNKDR (65 aa)) is domain III.

This sequence belongs to the RuvA family. Homotetramer. Forms an RuvA(8)-RuvB(12)-Holliday junction (HJ) complex. HJ DNA is sandwiched between 2 RuvA tetramers; dsDNA enters through RuvA and exits via RuvB. An RuvB hexamer assembles on each DNA strand where it exits the tetramer. Each RuvB hexamer is contacted by two RuvA subunits (via domain III) on 2 adjacent RuvB subunits; this complex drives branch migration. In the full resolvosome a probable DNA-RuvA(4)-RuvB(12)-RuvC(2) complex forms which resolves the HJ.

It localises to the cytoplasm. The RuvA-RuvB-RuvC complex processes Holliday junction (HJ) DNA during genetic recombination and DNA repair, while the RuvA-RuvB complex plays an important role in the rescue of blocked DNA replication forks via replication fork reversal (RFR). RuvA specifically binds to HJ cruciform DNA, conferring on it an open structure. The RuvB hexamer acts as an ATP-dependent pump, pulling dsDNA into and through the RuvAB complex. HJ branch migration allows RuvC to scan DNA until it finds its consensus sequence, where it cleaves and resolves the cruciform DNA. The chain is Holliday junction branch migration complex subunit RuvA from Prochlorococcus marinus (strain AS9601).